Reading from the N-terminus, the 414-residue chain is Myb1 protein (414 aa).

Myb-like domains follow at residues 242 to 266 (WNEVSEKLSNNQNAKECQKMWLYYG), 268 to 320 (FEDD…IKIN), and 328 to 381 (KVKL…TNLN).

The protein localises to the nucleus. Transcriptional activator. Has a role in the parasite erythrocytic cycle where it directly regulates key genes involved in cell cycle regulation and progression. Binds directly to Myb regulatory elements. The chain is Myb1 protein from Plasmodium falciparum (isolate 3D7).